The following is a 342-amino-acid chain: Anthranilate phosphoribosyltransferase (342 aa).

Residues G81, 84 to 85 (GD), T89, 91 to 94 (NIST), 109 to 117 (KHGNRALSS), and T121 contribute to the 5-phospho-alpha-D-ribose 1-diphosphate site. Residue G81 coordinates anthranilate. Residue S93 participates in Mg(2+) binding. An anthranilate-binding site is contributed by N112. R167 provides a ligand contact to anthranilate. Mg(2+) is bound by residues D225 and E226.

The protein belongs to the anthranilate phosphoribosyltransferase family. In terms of assembly, homodimer. Requires Mg(2+) as cofactor.

The catalysed reaction is N-(5-phospho-beta-D-ribosyl)anthranilate + diphosphate = 5-phospho-alpha-D-ribose 1-diphosphate + anthranilate. It functions in the pathway amino-acid biosynthesis; L-tryptophan biosynthesis; L-tryptophan from chorismate: step 2/5. Catalyzes the transfer of the phosphoribosyl group of 5-phosphorylribose-1-pyrophosphate (PRPP) to anthranilate to yield N-(5'-phosphoribosyl)-anthranilate (PRA). The chain is Anthranilate phosphoribosyltransferase from Agrobacterium fabrum (strain C58 / ATCC 33970) (Agrobacterium tumefaciens (strain C58)).